The following is a 1178-amino-acid chain: Pesticidal crystal protein Cry1Ac (1178 aa).

This sequence belongs to the delta endotoxin family.

In terms of biological role, promotes colloidosmotic lysis by binding to the midgut epithelial cells of many lepidopteran larvae. The protein is Pesticidal crystal protein Cry1Ac (cry1Ac) of Bacillus thuringiensis subsp. kurstaki.